The sequence spans 264 residues: tRNA pseudouridine synthase A (264 aa).

Catalysis depends on Asp-51, which acts as the Nucleophile. Residue Tyr-109 coordinates substrate.

The protein belongs to the tRNA pseudouridine synthase TruA family. As to quaternary structure, homodimer.

It carries out the reaction uridine(38/39/40) in tRNA = pseudouridine(38/39/40) in tRNA. Its function is as follows. Formation of pseudouridine at positions 38, 39 and 40 in the anticodon stem and loop of transfer RNAs. The chain is tRNA pseudouridine synthase A from Vibrio cholerae serotype O1 (strain ATCC 39541 / Classical Ogawa 395 / O395).